Consider the following 168-residue polypeptide: MASKNSASIALFFALNIIFFTLTAATDCGCNPSPKHKPVPSPKPKPVPSPKPKPVPSPSVPSPSVPSPNPRPVTPPRTPGSSGNCPIDALRLGVCANVLSSLLNIQLGQPSAQPCCSLIQGLVDLDAAICLCTALRANVLGINLNVPISLSVLLNVCNRKVPSGFQCA.

An N-terminal signal peptide occupies residues 1–25 (MASKNSASIALFFALNIIFFTLTAA). The interval 32–81 (PSPKHKPVPSPKPKPVPSPKPKPVPSPSVPSPSVPSPNPRPVTPPRTPGS) is disordered. The stretch at 34–41 (PKHKPVPS) is one A-1 repeat. Residues 34 to 57 (PKHKPVPSPKPKPVPSPKPKPVPS) are 3 X 8 AA repeats A of P-K-[HP]-K-P-V-P-S. Over residues 39-78 (VPSPKPKPVPSPKPKPVPSPSVPSPSVPSPNPRPVTPPRT) the composition is skewed to pro residues. One copy of the A-2 repeat lies at 42-49 (PKPKPVPS). Residues 50 to 57 (PKPKPVPS) form an A-3 repeat. A B-1 repeat occupies 58 to 62 (PSVPS). The 2 X 58 AA tandem repeats B of P-S-V-P-S stretch occupies residues 58 to 67 (PSVPSPSVPS). A B-2 repeat occupies 63 to 67 (PSVPS).

It belongs to the plant LTP family. PEARLI1 subfamily. Mostly expressed in aerial part of seedlings, and, to a lower extent, in roots. Higher basal levels in early-flowering ecotypes.

It is found in the secreted. The protein resides in the cell wall. Functionally, probable lipid transfer protein (LTP). May improve freezing survival. Seems to control the flowering process and lignin synthesis. Has an auxiliary role for germinability and early seedling development under low temperature and salt stress conditions, probably in an abscisic acid- (ABA) dependent manner. Confers resistance to Botrytis cinerea and exhibits anti-fungal activity, at least against S.cerevisiae, B.cinerea and Fusarium oxysporum, probably by increasing their membrane permeability. The chain is Lipid transfer protein EARLI 1 (EARLI1) from Arabidopsis thaliana (Mouse-ear cress).